The primary structure comprises 272 residues: Insertion element IS600 uncharacterized 31 kDa protein (272 aa).

Residues 105 to 268 (APTAPNQVWV…SPAAFREKYH (164 aa)) form the Integrase catalytic domain.

The polypeptide is Insertion element IS600 uncharacterized 31 kDa protein (Shigella sonnei).